Consider the following 194-residue polypeptide: Imidazoleglycerol-phosphate dehydratase (194 aa).

The protein belongs to the imidazoleglycerol-phosphate dehydratase family.

The protein resides in the cytoplasm. The enzyme catalyses D-erythro-1-(imidazol-4-yl)glycerol 3-phosphate = 3-(imidazol-4-yl)-2-oxopropyl phosphate + H2O. Its pathway is amino-acid biosynthesis; L-histidine biosynthesis; L-histidine from 5-phospho-alpha-D-ribose 1-diphosphate: step 6/9. This is Imidazoleglycerol-phosphate dehydratase from Lactiplantibacillus plantarum (strain ATCC BAA-793 / NCIMB 8826 / WCFS1) (Lactobacillus plantarum).